Here is a 224-residue protein sequence, read N- to C-terminus: Pyridoxine/pyridoxamine 5'-phosphate oxidase (224 aa).

FMN contacts are provided by residues arginine 69–lysine 74, phenylalanine 83–threonine 84, arginine 89, lysine 90, and glutamine 112. Lysine 74 serves as a coordination point for substrate. Residues tyrosine 130, arginine 134, and serine 138 each coordinate substrate. FMN contacts are provided by residues glutamine 148–serine 149 and tryptophan 194. Substrate is bound at residue arginine 200–histidine 202. Arginine 204 serves as a coordination point for FMN.

It belongs to the pyridoxamine 5'-phosphate oxidase family. In terms of assembly, homodimer. FMN serves as cofactor.

It carries out the reaction pyridoxamine 5'-phosphate + O2 + H2O = pyridoxal 5'-phosphate + H2O2 + NH4(+). It catalyses the reaction pyridoxine 5'-phosphate + O2 = pyridoxal 5'-phosphate + H2O2. The protein operates within cofactor metabolism; pyridoxal 5'-phosphate salvage; pyridoxal 5'-phosphate from pyridoxamine 5'-phosphate: step 1/1. Its pathway is cofactor metabolism; pyridoxal 5'-phosphate salvage; pyridoxal 5'-phosphate from pyridoxine 5'-phosphate: step 1/1. Catalyzes the oxidation of either pyridoxine 5'-phosphate (PNP) or pyridoxamine 5'-phosphate (PMP) into pyridoxal 5'-phosphate (PLP). The chain is Pyridoxine/pyridoxamine 5'-phosphate oxidase from Acidothermus cellulolyticus (strain ATCC 43068 / DSM 8971 / 11B).